Here is a 468-residue protein sequence, read N- to C-terminus: DNA polymerase IV 1 (468 aa).

The UmuC domain occupies 6 to 188 (VLHLDMDAFF…LPVRRLWGIG (183 aa)). Residues Asp10 and Asp105 each contribute to the Mg(2+) site. Glu106 is a catalytic residue.

Belongs to the DNA polymerase type-Y family. As to quaternary structure, monomer. The cofactor is Mg(2+).

The protein resides in the cytoplasm. The enzyme catalyses DNA(n) + a 2'-deoxyribonucleoside 5'-triphosphate = DNA(n+1) + diphosphate. Poorly processive, error-prone DNA polymerase involved in untargeted mutagenesis. Copies undamaged DNA at stalled replication forks, which arise in vivo from mismatched or misaligned primer ends. These misaligned primers can be extended by PolIV. Exhibits no 3'-5' exonuclease (proofreading) activity. May be involved in translesional synthesis, in conjunction with the beta clamp from PolIII. This chain is DNA polymerase IV 1 (dinB1), found in Mycobacterium tuberculosis (strain CDC 1551 / Oshkosh).